We begin with the raw amino-acid sequence, 475 residues long: Tubulin gamma-1 chain (475 aa).

142 to 148 (AGGTGSG) contacts GTP. The tract at residues 453–475 (VKRGNGPVDSKSEDSRSVTSAGS) is disordered.

This sequence belongs to the tubulin family. Interacts with Ote.

Its subcellular location is the cytoplasm. It is found in the cytoskeleton. The protein localises to the microtubule organizing center. It localises to the centrosome. The protein resides in the perinuclear region. Its function is as follows. Tubulin is the major constituent of microtubules. The gamma chain is found at microtubule organizing centers (MTOC) such as the spindle poles or the centrosome, suggesting that it is involved in the minus-end nucleation of microtubule assembly. This Drosophila melanogaster (Fruit fly) protein is Tubulin gamma-1 chain (gammaTub23C).